Here is a 642-residue protein sequence, read N- to C-terminus: MPVITLPDGSKREFAHPVSTLDVAADIGPGLAKACIAGRVNGELKDACDLIETDAELSIITAKDEEGIEILRHSCAHLLGHAIKQLWPQTKMAIGPVIDNGFYYDIDLEHKLTQEDIEALEKRMLELAKTNYDVVKRVVSWQEARDTFAARGEEYKIAILDENISKDATPALYHHEEYTDMCRGPHVPNMRFCHHFKLMSIAGAYWRGNSENKMLQRIYGTAWADKKALSTHLARLEEAAKRDHRKIGKQLDLYHMQEEAPGMVFWHNDGWSIFLELERFIRRKLNQYTYQEVKGPLMMDRVLWERSGHWDKYSEAMFTTSSENREYAVKPMNCPGHVQIFNQGLKSYRDLPLRMAEFGCCHRNEPSGSLHGLMRVRGFTQDDAHIFCTEDQVQAEVSSCIQMVYDTYSTFGFENIVVKLSTRPEKRIGDDAMWDRAEEALKQALRANNIEFTILPGEGAFYGPKIEFTLHDCLDRAWQCGTVQLDYALPSRLGATYVAEDNSRQTPVMIHRAILGSLERFLGILIEEYAGRFPTWLAPMQVVVMNITDKQADYVEEVVKFFKEQGIRASFDLRNEKIGFKIREHTLRRVPYLLVVGDQEMENKEVAVRTRDGVDLGKMRIEDFAAKIHQQISLRSLKLLEE.

The TGS domain occupies 1 to 61 (MPVITLPDGS…ETDAELSIIT (61 aa)). The tract at residues 243-534 (DHRKIGKQLD…LIEEYAGRFP (292 aa)) is catalytic. Zn(2+) is bound by residues Cys-334, His-385, and His-511.

It belongs to the class-II aminoacyl-tRNA synthetase family. In terms of assembly, homodimer. The cofactor is Zn(2+).

It localises to the cytoplasm. The enzyme catalyses tRNA(Thr) + L-threonine + ATP = L-threonyl-tRNA(Thr) + AMP + diphosphate + H(+). In terms of biological role, catalyzes the attachment of threonine to tRNA(Thr) in a two-step reaction: L-threonine is first activated by ATP to form Thr-AMP and then transferred to the acceptor end of tRNA(Thr). Also edits incorrectly charged L-seryl-tRNA(Thr). The chain is Threonine--tRNA ligase from Shewanella sp. (strain ANA-3).